A 265-amino-acid chain; its full sequence is uncharacterized protein (265 aa).

2 consecutive CBS domains span residues 9–64 (MTKK…EKVE) and 67–126 (MTKR…TTPK).

This is an uncharacterized protein from Methanocaldococcus jannaschii (strain ATCC 43067 / DSM 2661 / JAL-1 / JCM 10045 / NBRC 100440) (Methanococcus jannaschii).